A 186-amino-acid chain; its full sequence is Ribosome-recycling factor (186 aa).

The segment at 140 to 163 (LKKAEKDGDIGQDEGRSLSERVQK) is disordered.

It belongs to the RRF family.

Its subcellular location is the cytoplasm. In terms of biological role, responsible for the release of ribosomes from messenger RNA at the termination of protein biosynthesis. May increase the efficiency of translation by recycling ribosomes from one round of translation to another. This is Ribosome-recycling factor from Rhizobium rhizogenes (strain K84 / ATCC BAA-868) (Agrobacterium radiobacter).